We begin with the raw amino-acid sequence, 128 residues long: Small ribosomal subunit protein bS6 (128 aa).

Belongs to the bacterial ribosomal protein bS6 family.

In terms of biological role, binds together with bS18 to 16S ribosomal RNA. The protein is Small ribosomal subunit protein bS6 of Geotalea uraniireducens (strain Rf4) (Geobacter uraniireducens).